Here is a 195-residue protein sequence, read N- to C-terminus: 2-amino-4-hydroxy-6-hydroxymethyldihydropteridine pyrophosphokinase (195 aa).

Belongs to the HPPK family.

It carries out the reaction 6-hydroxymethyl-7,8-dihydropterin + ATP = (7,8-dihydropterin-6-yl)methyl diphosphate + AMP + H(+). Its pathway is cofactor biosynthesis; tetrahydrofolate biosynthesis; 2-amino-4-hydroxy-6-hydroxymethyl-7,8-dihydropteridine diphosphate from 7,8-dihydroneopterin triphosphate: step 4/4. In terms of biological role, catalyzes the transfer of pyrophosphate from adenosine triphosphate (ATP) to 6-hydroxymethyl-7,8-dihydropterin, an enzymatic step in folate biosynthesis pathway. This is 2-amino-4-hydroxy-6-hydroxymethyldihydropteridine pyrophosphokinase (folK) from Synechocystis sp. (strain ATCC 27184 / PCC 6803 / Kazusa).